The following is a 498-amino-acid chain: ATP synthase subunit beta, chloroplastic (498 aa).

An ATP-binding site is contributed by 172–179 (GGAGVGKT).

Belongs to the ATPase alpha/beta chains family. As to quaternary structure, F-type ATPases have 2 components, CF(1) - the catalytic core - and CF(0) - the membrane proton channel. CF(1) has five subunits: alpha(3), beta(3), gamma(1), delta(1), epsilon(1). CF(0) has four main subunits: a(1), b(1), b'(1) and c(9-12).

It localises to the plastid. Its subcellular location is the chloroplast thylakoid membrane. It catalyses the reaction ATP + H2O + 4 H(+)(in) = ADP + phosphate + 5 H(+)(out). Produces ATP from ADP in the presence of a proton gradient across the membrane. The catalytic sites are hosted primarily by the beta subunits. In Helianthus annuus (Common sunflower), this protein is ATP synthase subunit beta, chloroplastic.